A 239-amino-acid chain; its full sequence is Seed lectin beta chain (239 aa).

D-glucose contacts are provided by aspartate 88 and glycine 106. Glutamate 126 and aspartate 128 together coordinate Mn(2+). Residues aspartate 128, asparagine 132, and aspartate 137 each coordinate Ca(2+). Aspartate 137 and histidine 142 together coordinate Mn(2+). The D-glucose site is built by glycine 217 and alanine 218.

The protein belongs to the leguminous lectin family. In terms of assembly, tetramer consisting of heterodimers of alpha and beta chains.

Functionally, galactose-binding lectin. Agglutinates human erythrocytes, and requires Ca(2+) and Mn(2+) ions for full agglutinating activity. Has antifungal activity against Fusarium sp., A.niger and A.flavus. In Spatholobus parviflorus (Butea parviflora), this protein is Seed lectin beta chain.